The following is a 757-amino-acid chain: RNA-directed RNA polymerase catalytic subunit (757 aa).

The interval 50–82 is disordered; the sequence is SEKGKWTTNTETGAPQLNPIDGPLPEDNEPSGY. A compositionally biased stretch (polar residues) spans 55-64; the sequence is WTTNTETGAP. 2 consecutive short sequence motifs (nuclear localization signal) follow at residues 187–195 and 203–216; these read RKRRVRDNM and RTIG…NKRS. A promoter-binding site region spans residues 249 to 256; it reads RGFVYFVE. A RdRp catalytic domain is found at 286–483; sequence VRKMMTNSQD…GINMSKKKSY (198 aa).

This sequence belongs to the influenza viruses polymerase PB1 family. Influenza RNA polymerase is composed of three subunits: PB1, PB2 and PA. Interacts (via N-terminus) with PA (via C-terminus). Interacts (via C-terminus) with PB2 (via N-terminus); this interaction is essential for transcription initiation. Phosphorylated by host PRKCA.

Its subcellular location is the host nucleus. The protein resides in the host cytoplasm. The enzyme catalyses RNA(n) + a ribonucleoside 5'-triphosphate = RNA(n+1) + diphosphate. Functionally, RNA-dependent RNA polymerase which is responsible for replication and transcription of virus RNA segments. The transcription of viral mRNAs occurs by a unique mechanism called cap-snatching. 5' methylated caps of cellular mRNAs are cleaved after 10-13 nucleotides by PA. In turn, these short capped RNAs are used as primers by PB1 for transcription of viral mRNAs. During virus replication, PB1 initiates RNA synthesis and copy vRNA into complementary RNA (cRNA) which in turn serves as a template for the production of more vRNAs. The sequence is that of RNA-directed RNA polymerase catalytic subunit from Influenza A virus (strain A/Hong Kong/1/1968 H3N2).